A 162-amino-acid chain; its full sequence is MIRIGHGFDVHAFGGEGPIIIGGVAIPYEKGLVAHSDGDVALHALTDALLGAMALGDIGKLFPDTDIQYKGADSRRLLRTAYQAILDKGYQVGNVDITIIAQAPKMRPYIDAMRTVIAQDLHCDIEQVNVKATTTEKLGFTGRSEGIACEAVALLIKQTGTK.

A divalent metal cation contacts are provided by D9 and H11. 4-CDP-2-C-methyl-D-erythritol 2-phosphate contacts are provided by residues 9–11 (DVH) and 35–36 (HS). An a divalent metal cation-binding site is contributed by H43. 4-CDP-2-C-methyl-D-erythritol 2-phosphate is bound by residues 57–59 (DIG), 62–66 (FPDTD), 133–136 (TTTE), F140, and R143.

It belongs to the IspF family. In terms of assembly, homotrimer. The cofactor is a divalent metal cation.

The catalysed reaction is 4-CDP-2-C-methyl-D-erythritol 2-phosphate = 2-C-methyl-D-erythritol 2,4-cyclic diphosphate + CMP. Its pathway is isoprenoid biosynthesis; isopentenyl diphosphate biosynthesis via DXP pathway; isopentenyl diphosphate from 1-deoxy-D-xylulose 5-phosphate: step 4/6. Functionally, involved in the biosynthesis of isopentenyl diphosphate (IPP) and dimethylallyl diphosphate (DMAPP), two major building blocks of isoprenoid compounds. Catalyzes the conversion of 4-diphosphocytidyl-2-C-methyl-D-erythritol 2-phosphate (CDP-ME2P) to 2-C-methyl-D-erythritol 2,4-cyclodiphosphate (ME-CPP) with a corresponding release of cytidine 5-monophosphate (CMP). The sequence is that of 2-C-methyl-D-erythritol 2,4-cyclodiphosphate synthase from Histophilus somni (strain 129Pt) (Haemophilus somnus).